Consider the following 242-residue polypeptide: Small ribosomal subunit protein uS2 (242 aa).

This sequence belongs to the universal ribosomal protein uS2 family.

In Shewanella sediminis (strain HAW-EB3), this protein is Small ribosomal subunit protein uS2.